The following is a 416-amino-acid chain: UDP-N-acetylmuramoylalanine--D-glutamate ligase (416 aa).

ATP is bound at residue 104 to 110 (GSNGKST).

This sequence belongs to the MurCDEF family.

The protein resides in the cytoplasm. It catalyses the reaction UDP-N-acetyl-alpha-D-muramoyl-L-alanine + D-glutamate + ATP = UDP-N-acetyl-alpha-D-muramoyl-L-alanyl-D-glutamate + ADP + phosphate + H(+). It functions in the pathway cell wall biogenesis; peptidoglycan biosynthesis. In terms of biological role, cell wall formation. Catalyzes the addition of glutamate to the nucleotide precursor UDP-N-acetylmuramoyl-L-alanine (UMA). The chain is UDP-N-acetylmuramoylalanine--D-glutamate ligase from Francisella tularensis subsp. mediasiatica (strain FSC147).